A 329-amino-acid chain; its full sequence is DNA-directed RNA polymerase subunit alpha (329 aa).

Residues 1-235 (MQGSVTEFLK…EQLDAFVDLR (235 aa)) form an alpha N-terminal domain (alpha-NTD) region. The segment at 249–329 (FDPILLRPVD…NWPPASIAED (81 aa)) is alpha C-terminal domain (alpha-CTD).

This sequence belongs to the RNA polymerase alpha chain family. Homodimer. The RNAP catalytic core consists of 2 alpha, 1 beta, 1 beta' and 1 omega subunit. When a sigma factor is associated with the core the holoenzyme is formed, which can initiate transcription.

It catalyses the reaction RNA(n) + a ribonucleoside 5'-triphosphate = RNA(n+1) + diphosphate. Functionally, DNA-dependent RNA polymerase catalyzes the transcription of DNA into RNA using the four ribonucleoside triphosphates as substrates. The protein is DNA-directed RNA polymerase subunit alpha of Histophilus somni (strain 129Pt) (Haemophilus somnus).